We begin with the raw amino-acid sequence, 401 residues long: Chorismate synthase (401 aa).

Arg40 and Arg46 together coordinate NADP(+). FMN-binding positions include 135 to 137 (RAS), 256 to 257 (QA), Gly300, 315 to 319 (KPIST), and Arg341.

The protein belongs to the chorismate synthase family. As to quaternary structure, homotetramer. Requires FMNH2 as cofactor.

It catalyses the reaction 5-O-(1-carboxyvinyl)-3-phosphoshikimate = chorismate + phosphate. The protein operates within metabolic intermediate biosynthesis; chorismate biosynthesis; chorismate from D-erythrose 4-phosphate and phosphoenolpyruvate: step 7/7. In terms of biological role, catalyzes the anti-1,4-elimination of the C-3 phosphate and the C-6 proR hydrogen from 5-enolpyruvylshikimate-3-phosphate (EPSP) to yield chorismate, which is the branch point compound that serves as the starting substrate for the three terminal pathways of aromatic amino acid biosynthesis. This reaction introduces a second double bond into the aromatic ring system. This is Chorismate synthase from Mycobacterium avium (strain 104).